The following is a 942-amino-acid chain: ATP-dependent RNA helicase DDX42 (942 aa).

Residues 1 to 18 show a composition bias toward gly residues; it reads MNWNKGGPGTKRGFGFGG. The interval 1–114 is disordered; sequence MNWNKGGPGT…KPIDSDSDDD (114 aa). Lys-5 is subject to N6-acetyllysine. Position 12 is an omega-N-methylarginine (Arg-12). The span at 35–52 shows a compositional bias: low complexity; the sequence is SHSAFGATSSSSGFGKSA. Ser-58 carries the phosphoserine modification. Residues 70-84 show a composition bias toward acidic residues; it reads DEENAYFEDEEEDSS. Residues Ser-96, Ser-104, Ser-109, and Ser-111 each carry the phosphoserine modification. The stretch at 116 to 157 forms a coiled coil; sequence LEAFMAEVEDQAARDMKRLEEKDKERKNVKGIRDDIEEEDDQ. Residues 182–203 form a disordered region; the sequence is EYDSDGNPIAPTKKIIDPLPPI. A Phosphoserine modification is found at Ser-185. A Q motif motif is present at residues 253-281; sequence SSFAHFGFDEQLMHQIRKSEYTQPTPIQC. The 176-residue stretch at 284–459 folds into the Helicase ATP-binding domain; sequence VPVALSGRDM…RDILIDPIRV (176 aa). 297–304 lines the ATP pocket; that stretch reads AKTGSGKT. Positions 407–410 match the DEAD box motif; the sequence is DEAD. The Helicase C-terminal domain maps to 487–632; sequence WLTRRLVEFT…HVSKELLDLA (146 aa). Polar residues-rich tracts occupy residues 737-760 and 786-798; these read LNSVPTNSAQQGHNSPDSPITSAT and GVNNTASGNNSRE. Disordered stretches follow at residues 737 to 762 and 783 to 942; these read LNSVPTNSAQQGHNSPDSPITSATKG and GAQG…RWDS. Positions 738–833 are necessary for interaction with TP53BP2; that stretch reads NSVPTNSAQQ…TGNRHSDSPR (96 aa). Phosphoserine is present on Ser-754. Residues 820–924 show a composition bias toward basic and acidic residues; sequence SHGETGNRHS…KVDSKTDKTA (105 aa). Residue Lys-899 forms a Glycyl lysine isopeptide (Lys-Gly) (interchain with G-Cter in SUMO2) linkage.

Belongs to the DEAD box helicase family. DDX42 subfamily. Transient component of the SF3B subcomplex of the 17S U2 SnRNP complex. Interacts (via the C-terminus) with TP53BP2; the interaction is not inhibitied by TP53BP2 ubiquitination and is independent of p53/TP53.

It localises to the cytoplasm. Its subcellular location is the nucleus. It carries out the reaction ATP + H2O = ADP + phosphate + H(+). In terms of biological role, ATP-dependent RNA helicase that binds to partially double-stranded RNAs (dsRNAs) in order to unwind RNA secondary structures. Unwinding is promoted in the presence of single-strand binding proteins. Also mediates RNA duplex formation thereby displacing the single-strand RNA binding protein. ATP and ADP modulate its activity: ATP binding and hydrolysis by DDX42 triggers RNA strand separation, whereas the ADP-bound form of the protein triggers annealing of complementary RNA strands. Required for assembly of the 17S U2 SnRNP complex of the spliceosome, a large ribonucleoprotein complex that removes introns from transcribed pre-mRNAs: DDX42 associates transiently with the SF3B subcomplex of the 17S U2 SnRNP complex and is released after fulfilling its role in the assembly of 17S U2 SnRNP. Involved in the survival of cells by interacting with TP53BP2 and thereby counteracting the apoptosis-stimulating activity of TP53BP2. Relocalizes TP53BP2 to the cytoplasm. In Pongo abelii (Sumatran orangutan), this protein is ATP-dependent RNA helicase DDX42 (DDX42).